The primary structure comprises 762 residues: MPRSPGTRLKPAKYIPVATAAALLVGSSTLFFVFTCPWLTRAVSPAIPVYNGILFLFVLANFSMATFMDPGVFPRADEDEDKEDDFRAPLYKNVDVRGIQVRMKWCATCHFYRPPRCSHCSVCDNCVEDFDHHCPWVNNCIGRRNYRYFFLFLLSLSAHMVGVVAFGLLYVLNHSEGLGAAHTTITMAVMCVAGLFFIPVIGLTGFHVVLVTRGRTTNEQVTGKFRGGVNPFTRGCYGNVEHVLCSPLAPRYVVEPPRMPLSVSLKPPFLRPELLERAVPLKVKLSDNGLKAGRSKSKGSLDQLDEKPLDLGPPLPPKIEAGTFGRDLKTPRPGSAESALSVQRTSPPTPAMYKFRPAFSTGPKTPFCGPNEQVPGPDSLTLADDSTHSLDFVSEPSLDLPDHGPGGLRPPYPPSPPLNTTDAFSGALRSLSLKAASRRGGDHMTLQPLRSEGGPPTPHRSLFAPHALPNRNGSLSYDSLLNPGSPSGHACPTHPSVGIASYHSPYLHPGPSDPPRPPPRSFSPVLGPRPREPSPVRYDNLSRTIMASIQERKDREERERLLRSQTDSLFGDSGVYDTPSSYSLQQASVLTEGPRGSVLRYGSRDDLVAGPGFGGARNPALQTSLSSLSSSMSRAPRTSSSSLQADQANNNAPGPRPGSGSHRSPARQGLPSPPGTPRSPSYTGSKAVAFIHTDLPDRQPSLAMQRDHPQLKTPPSKLNGQSPGMARLGPAASPMGPNASPARHTLVKKVSGVGGTTYEISV.

Residues 1–13 are Cytoplasmic-facing; it reads MPRSPGTRLKPAK. A helical membrane pass occupies residues 14 to 34; it reads YIPVATAAALLVGSSTLFFVF. At 35 to 52 the chain is on the lumenal side; the sequence is TCPWLTRAVSPAIPVYNG. A helical transmembrane segment spans residues 53–73; that stretch reads ILFLFVLANFSMATFMDPGVF. Residues 74–148 lie on the Cytoplasmic side of the membrane; it reads PRADEDEDKE…NCIGRRNYRY (75 aa). The DHHC domain maps to 104 to 154; sequence KWCATCHFYRPPRCSHCSVCDNCVEDFDHHCPWVNNCIGRRNYRYFFLFLL. Catalysis depends on Cys134, which acts as the S-palmitoyl cysteine intermediate. Residues 149 to 169 form a helical membrane-spanning segment; sequence FFLFLLSLSAHMVGVVAFGLL. The Lumenal segment spans residues 170-190; the sequence is YVLNHSEGLGAAHTTITMAVM. The chain crosses the membrane as a helical span at residues 191-211; that stretch reads CVAGLFFIPVIGLTGFHVVLV. Residues 212–762 lie on the Cytoplasmic side of the membrane; it reads TRGRTTNEQV…VGGTTYEISV (551 aa). 4 disordered regions span residues 289-350, 362-423, 436-537, and 551-574; these read GLKA…PPTP, GPKT…TTDA, ASRR…SPVR, and ERKD…GDSG. A Phosphoserine modification is found at Ser335. Residues 408–417 show a composition bias toward pro residues; it reads LRPPYPPSPP. An Omega-N-methylarginine modification is found at Arg439. Positions 471-485 are enriched in polar residues; it reads RNGSLSYDSLLNPGS. Residues 511 to 521 are compositionally biased toward pro residues; that stretch reads PSDPPRPPPRS. The segment covering 551 to 562 has biased composition (basic and acidic residues); that stretch reads ERKDREERERLL. A phosphoserine mark is found at Ser603 and Ser624. Positions 626–644 are enriched in low complexity; the sequence is SSLSSSMSRAPRTSSSSLQ. 2 disordered regions span residues 626–684 and 707–744; these read SSLS…SYTG and DHPQ…PARH. A phosphoserine mark is found at Ser672, Ser679, Ser722, and Ser740.

The protein belongs to the DHHC palmitoyltransferase family. ERF2/ZDHHC9 subfamily. Expressed in brain cortex and hippocampus.

The protein resides in the golgi apparatus membrane. Its subcellular location is the mitochondrion membrane. The catalysed reaction is L-cysteinyl-[protein] + hexadecanoyl-CoA = S-hexadecanoyl-L-cysteinyl-[protein] + CoA. Palmitoyltransferase that catalyzes the addition of palmitate onto various protein substrates and therefore functions in several unrelated biological processes. Through the palmitoylation of ABCA1 regulates the localization of the transporter to the plasma membrane and thereby regulates its function in cholesterol and phospholipid efflux. Could also pamitoylate the D(2) dopamine receptor DRD2 and regulate its stability and localization to the plasma membrane. Could also play a role in glutamatergic transmission. The chain is Palmitoyltransferase ZDHHC8 from Mus musculus (Mouse).